We begin with the raw amino-acid sequence, 286 residues long: Polygalacturonan/rhamnogalacturonan transport system permease protein YtcP (286 aa).

The next 6 membrane-spanning stretches (helical) occupy residues 9–29, 69–89, 106–126, 131–151, 176–196, and 251–271; these read LIYGFLLMFALICVLPFIHVI, LLVSVFVTVIGTAVSMFLSSL, MFLVVFTMLFSGGMIPTFLVV, LLDSYWALILPTAINAFNLII, GIFFKIVLPLSLPAIATISLF, and TIKMAVIVVATIPVLLVYPFI. The ABC transmembrane type-1 domain maps to 69 to 271; the sequence is LLVSVFVTVI…IPVLLVYPFI (203 aa).

This sequence belongs to the binding-protein-dependent transport system permease family. CysTW subfamily. In terms of assembly, the complex is probably composed of two ATP-binding proteins (MsmX), two transmembrane proteins (YtcP and YteP) and a solute-binding protein (YtcQ).

It localises to the cell membrane. Functionally, involved in pectin degradation. Part of the ABC transporter complex YtcQP-YteP involved in the uptake of polygalacturonan and rhamnogalacturonan type I. Responsible for the translocation of the substrate across the membrane. This chain is Polygalacturonan/rhamnogalacturonan transport system permease protein YtcP (ytcP), found in Bacillus subtilis (strain 168).